A 342-amino-acid chain; its full sequence is Probable dual-specificity RNA methyltransferase RlmN (342 aa).

Glu-91 serves as the catalytic Proton acceptor. A Radical SAM core domain is found at 97–327; that stretch reads YKHGNSICVS…TTIRREMGAD (231 aa). An intrachain disulfide couples Cys-104 to Cys-332. 3 residues coordinate [4Fe-4S] cluster: Cys-111, Cys-115, and Cys-118. Residues 158–159, Ser-190, 213–215, and Asn-289 each bind S-adenosyl-L-methionine; these read GE and SLH. Cys-332 serves as the catalytic S-methylcysteine intermediate.

This sequence belongs to the radical SAM superfamily. RlmN family. It depends on [4Fe-4S] cluster as a cofactor.

It is found in the cytoplasm. It carries out the reaction adenosine(2503) in 23S rRNA + 2 reduced [2Fe-2S]-[ferredoxin] + 2 S-adenosyl-L-methionine = 2-methyladenosine(2503) in 23S rRNA + 5'-deoxyadenosine + L-methionine + 2 oxidized [2Fe-2S]-[ferredoxin] + S-adenosyl-L-homocysteine. The catalysed reaction is adenosine(37) in tRNA + 2 reduced [2Fe-2S]-[ferredoxin] + 2 S-adenosyl-L-methionine = 2-methyladenosine(37) in tRNA + 5'-deoxyadenosine + L-methionine + 2 oxidized [2Fe-2S]-[ferredoxin] + S-adenosyl-L-homocysteine. Specifically methylates position 2 of adenine 2503 in 23S rRNA and position 2 of adenine 37 in tRNAs. This Clostridium botulinum (strain Langeland / NCTC 10281 / Type F) protein is Probable dual-specificity RNA methyltransferase RlmN.